The sequence spans 570 residues: MQTSNFRKKNAAEVDFFMGYGDVNRYEVLEVIGKGSYGLVCSANDIHTGEKVAIKKIHNIFEHISDAARILREIKLLRLLRHPDIVEIKHIMLPPSKMDFRDIYVVFELMESDLHQVIKANDDLTREHYQFFLYQMLRALKYIHTANVYHRDLKPKNILANANCKLKICDFGLARVAFTDAPTTVFWTDYVATRWYRAPELCGSFYSKYTPAIDIWSIGCIFAEVLIGKPLFPGKNVVHQLDLITDLLGTPSLDAISQVRNDKARKYLTCMRKKQPASFSHKFLKADPLALQLLRKLLAFDPKDRPSAQEALADPYFNGLAKVEREPSCQPIPKMEFEFERRRATKEDIKELIFQEILEYHPQLLKEHISGTERPNFHHLSVVDQFRKQFTQVEENLNGSGAAVSLQRKHSSLPRSTIVHSAAIPAKDYKHVASSSTKLAVDGSWNAQIQGVHANIAGEPSTIVRPAVSSERSLAPTLQWQPNMTHFLNHALCYQNTVFSGSLLDATGPAQAIPRTTPYVDYRSGNLDLYQHHVSREDVQSDTATAQAHAASHGPVPAVSYSLPGTYRIT.

Residues 26 to 317 (YEVLEVIGKG…AQEALADPYF (292 aa)) enclose the Protein kinase domain. Residues 32–40 (IGKGSYGLV) and Lys-55 contribute to the ATP site. Asp-152 acts as the Proton acceptor in catalysis. The residue at position 188 (Thr-188) is a Phosphothreonine. The short motif at 188 to 190 (TDY) is the TXY element. Tyr-190 is modified (phosphotyrosine).

The protein belongs to the protein kinase superfamily. CMGC Ser/Thr protein kinase family. MAP kinase subfamily. Post-translationally, dually phosphorylated on Thr-188 and Tyr-190, which activates the enzyme.

It catalyses the reaction L-seryl-[protein] + ATP = O-phospho-L-seryl-[protein] + ADP + H(+). The enzyme catalyses L-threonyl-[protein] + ATP = O-phospho-L-threonyl-[protein] + ADP + H(+). Its activity is regulated as follows. Activated by threonine and tyrosine phosphorylation. The chain is Mitogen-activated protein kinase 11 (MPK11) from Oryza sativa subsp. japonica (Rice).